The following is a 338-amino-acid chain: Fructose-1,6-bisphosphatase 1 (338 aa).

Thr2 is modified (N-acetylthreonine). AMP contacts are provided by residues Val18–Gly22 and Thr28–Thr32. Asp69 and Glu98 together coordinate Mg(2+). Lys113–Tyr114 serves as a coordination point for AMP. Residues Asp119, Leu121, and Asp122 each contribute to the Mg(2+) site. Residue Asp122–Ser125 coordinates substrate. Position 141 (Lys141) interacts with AMP. N6-succinyllysine is present on Lys151. Ser208 is subject to Phosphoserine. Substrate-binding positions include Asn213 to Tyr216, Arg244 to Met249, Tyr265, and Lys275 to Arg277. Phosphotyrosine is present on residues Tyr216, Tyr245, and Tyr265. Glu281 provides a ligand contact to Mg(2+).

It belongs to the FBPase class 1 family. Homotetramer. Mg(2+) serves as cofactor.

It carries out the reaction beta-D-fructose 1,6-bisphosphate + H2O = beta-D-fructose 6-phosphate + phosphate. Its pathway is carbohydrate biosynthesis; gluconeogenesis. With respect to regulation, subject to complex allosteric regulation. The enzyme can assume an active R-state, or an inactive T-state. Intermediate conformations may exist. AMP acts as an allosteric inhibitor. AMP binding affects the turnover of bound substrate and not the affinity for substrate. Fructose 2,6-bisphosphate acts as a competitive inhibitor. Fructose 2,6-bisphosphate and AMP have synergistic effects. Catalyzes the hydrolysis of fructose 1,6-bisphosphate to fructose 6-phosphate in the presence of divalent cations, acting as a rate-limiting enzyme in gluconeogenesis. Plays a role in regulating glucose sensing and insulin secretion of pancreatic beta-cells. Appears to modulate glycerol gluconeogenesis in liver. Important regulator of appetite and adiposity; increased expression of the protein in liver after nutrient excess increases circulating satiety hormones and reduces appetite-stimulating neuropeptides and thus seems to provide a feedback mechanism to limit weight gain. This is Fructose-1,6-bisphosphatase 1 (FBP1) from Bos taurus (Bovine).